A 225-amino-acid polypeptide reads, in one-letter code: MDNTTNCTLGTEQAVQLFKEYNLFVTAFLLFLTILLQYGYATRNKVIYILKMIVLWCFWPLNIAVGAISCIYPPNTGGLVAAIILTVFACLSFIGYWIQSFRLFKRCRSWWAFNPESNAVGSILLTNGQQCNFAIESVPMVLSPIIKNGVLYCEGQWLAKCEPDHLPKDIFVCTPDRRNIYRMVQRYTGDQSGNKKRFATFIYVKHSVDTGELESVATGGSSLYT.

Over 1 to 20 (MDNTTNCTLGTEQAVQLFKE) the chain is Virion surface. A helical transmembrane segment spans residues 21–41 (YNLFVTAFLLFLTILLQYGYA). The Intravirion segment spans residues 42–51 (TRNKVIYILK). Residues 52–72 (MIVLWCFWPLNIAVGAISCIY) traverse the membrane as a helical segment. Over 73 to 77 (PPNTG) the chain is Virion surface. A helical transmembrane segment spans residues 78–98 (GLVAAIILTVFACLSFIGYWI). Residues 99–225 (QSFRLFKRCR…VATGGSSLYT (127 aa)) are Intravirion-facing.

It belongs to the gammacoronaviruses M protein family. In terms of assembly, homomultimer. Interacts with envelope E protein in the budding compartment of the host cell, which is located between endoplasmic reticulum and the Golgi complex. Forms a complex with HE and S proteins. Interacts with nucleocapsid N protein. This interaction probably participates in RNA packaging into the virus.

It localises to the virion membrane. Its subcellular location is the host Golgi apparatus membrane. Functionally, component of the viral envelope that plays a central role in virus morphogenesis and assembly via its interactions with other viral proteins. This Avian infectious bronchitis virus (strain 6/82) (IBV) protein is Membrane protein.